We begin with the raw amino-acid sequence, 481 residues long: Dual specificity protein kinase CLK4 (481 aa).

Disordered regions lie at residues 1-47 and 102-143; these read MRHS…KPHH and SKSS…EDDE. Over residues 8-19 the composition is skewed to basic and acidic residues; that stretch reads HCPDWDSRESWG. Basic residues-rich tracts occupy residues 106-119 and 126-136; these read VRSR…KRNR and SHSKSHRRKRS. Phosphoserine is present on residues serine 136 and serine 138. The 317-residue stretch at 159–475 folds into the Protein kinase domain; it reads YEIVDTLGEG…LDEALQHPFF (317 aa). ATP contacts are provided by residues 165-173 and lysine 189; that span reads LGEGAFGKV. The active-site Proton acceptor is the aspartate 286.

It belongs to the protein kinase superfamily. CMGC Ser/Thr protein kinase family. Lammer subfamily. As to quaternary structure, interacts with UBL5. Post-translationally, autophosphorylates on all three types of residues. As to expression, expressed in the hippocampus, the cerebellum and the olfactory bulb.

It localises to the nucleus. It carries out the reaction L-seryl-[protein] + ATP = O-phospho-L-seryl-[protein] + ADP + H(+). The catalysed reaction is L-threonyl-[protein] + ATP = O-phospho-L-threonyl-[protein] + ADP + H(+). The enzyme catalyses L-tyrosyl-[protein] + ATP = O-phospho-L-tyrosyl-[protein] + ADP + H(+). TG003 inhibits its kinase activity and affects the regulation of alternative splicing mediated by phosphorylation of SR proteins. Dual specificity kinase acting on both serine/threonine and tyrosine-containing substrates. Phosphorylates serine- and arginine-rich (SR) proteins of the spliceosomal complex and may be a constituent of a network of regulatory mechanisms that enable SR proteins to control RNA splicing. Phosphorylates SRSF1 and SRSF3. Required for the regulation of alternative splicing of MAPT/TAU. Regulates the alternative splicing of tissue factor (F3) pre-mRNA in endothelial cells. The polypeptide is Dual specificity protein kinase CLK4 (Clk4) (Mus musculus (Mouse)).